The chain runs to 339 residues: Terpene synthase 9 (339 aa).

The DDxx(x)D/E motif signature appears at 79-84 (DDFLES). Positions 219 to 227 (NDCASYAKE) match the NDxxSxxxD/E motif motif.

Belongs to the terpene synthase family.

The enzyme catalyses (2E,6E)-farnesyl diphosphate = (-)-beta-barbatene + diphosphate. It catalyses the reaction (2E,6E)-farnesyl diphosphate = (E)-beta-farnesene + diphosphate. The catalysed reaction is (2E)-geranyl diphosphate = (Z)-beta-ocimene + diphosphate. It carries out the reaction (2E)-geranyl diphosphate + H2O = linalool + diphosphate. The enzyme catalyses (2E)-geranyl diphosphate = beta-myrcene + diphosphate. Terpene synthase that converts its substrate farnesyl diphosphate (FPP) into the sesquiterpene beta-barbatene as a major product as well as (E)-beta-farnesene as a minor product. Is also able to convert geranyl diphosphate (GPP) into a mixture of monoterpenes including (Z)-beta-ocimene, linalool, beta-myrcene, limonene and alpha-terpineol. The sequence is that of Terpene synthase 9 from Dictyostelium discoideum (Social amoeba).